Consider the following 387-residue polypeptide: Phosphoglycerate kinase (387 aa).

Residues aspartate 21 to asparagine 23, arginine 36, histidine 60 to arginine 63, arginine 114, and arginine 147 contribute to the substrate site. ATP contacts are provided by residues lysine 198, glutamate 313, and glycine 339–threonine 342.

It belongs to the phosphoglycerate kinase family. As to quaternary structure, monomer.

Its subcellular location is the cytoplasm. The catalysed reaction is (2R)-3-phosphoglycerate + ATP = (2R)-3-phospho-glyceroyl phosphate + ADP. Its pathway is carbohydrate degradation; glycolysis; pyruvate from D-glyceraldehyde 3-phosphate: step 2/5. In Baumannia cicadellinicola subsp. Homalodisca coagulata, this protein is Phosphoglycerate kinase.